The chain runs to 216 residues: uncharacterized protein (216 aa).

One can recognise an Integrase catalytic domain in the interval 54 to 215 (TATQPNEKWT…SPVNYRTQSL (162 aa)).

It belongs to the transposase IS3/IS150/IS904 family.

This is an uncharacterized protein from Haemophilus influenzae (strain ATCC 51907 / DSM 11121 / KW20 / Rd).